The chain runs to 193 residues: V-type ATP synthase subunit E (193 aa).

This sequence belongs to the V-ATPase E subunit family.

In terms of biological role, produces ATP from ADP in the presence of a proton gradient across the membrane. The polypeptide is V-type ATP synthase subunit E (Anaeromyxobacter sp. (strain Fw109-5)).